Reading from the N-terminus, the 160-residue chain is Putative 4-hydroxy-4-methyl-2-oxoglutarate aldolase (160 aa).

Substrate contacts are provided by residues Gly78–Ile81 and Arg100. Position 101 (Asp101) interacts with a divalent metal cation.

The protein belongs to the class II aldolase/RraA-like family. In terms of assembly, homotrimer. The cofactor is a divalent metal cation.

The enzyme catalyses 4-hydroxy-4-methyl-2-oxoglutarate = 2 pyruvate. It carries out the reaction oxaloacetate + H(+) = pyruvate + CO2. Catalyzes the aldol cleavage of 4-hydroxy-4-methyl-2-oxoglutarate (HMG) into 2 molecules of pyruvate. Also contains a secondary oxaloacetate (OAA) decarboxylase activity due to the common pyruvate enolate transition state formed following C-C bond cleavage in the retro-aldol and decarboxylation reactions. The protein is Putative 4-hydroxy-4-methyl-2-oxoglutarate aldolase of Mycolicibacterium vanbaalenii (strain DSM 7251 / JCM 13017 / BCRC 16820 / KCTC 9966 / NRRL B-24157 / PYR-1) (Mycobacterium vanbaalenii).